Reading from the N-terminus, the 480-residue chain is Endothelial transcription factor GATA-2 (480 aa).

Residue Ser73 is modified to Phosphoserine. Arg86 carries the asymmetric dimethylarginine modification. Positions 166 to 208 are disordered; sequence SGSHLFGFPPTPPKEVSPDPSTTGAASPASSSAGGSVARGEDK. The segment covering 183-201 has biased composition (low complexity); it reads PDPSTTGAASPASSSAGGS. Ser192 carries the post-translational modification Phosphoserine. GATA-type zinc fingers lie at residues 295–319 and 349–373; these read CVNC…CNAC and CANC…CNAC. A Glycyl lysine isopeptide (Lys-Gly) (interchain with G-Cter in SUMO2) cross-link involves residue Lys389. Residues 457–480 form a disordered region; sequence TPIHPSSSLSFGHPHPSSMVTAMG.

In terms of assembly, interacts with BRD3. Interacts with AR and CCAR1. Interacts with MDFIC.

Its subcellular location is the nucleus. Functionally, transcriptional activator which regulates endothelin-1 gene expression in endothelial cells. Binds to the consensus sequence 5'-AGATAG-3'. This is Endothelial transcription factor GATA-2 (Gata2) from Mus musculus (Mouse).